The sequence spans 397 residues: MNCSIGNWKHTVLYLTLIVSLLYFIESLISHKLHINYNKIRLKRSPNLPLRFRDDGTFKILQVADMHFGMGMITRCRDVLDSEFEYCSDLNTTRFLRRMIESERPDLIAFTGDNIFGSSTTDAAESLLEAIGPAIEYGIPWAAVLGNHDHESTLNRLELMTFLSLMDFSVSQINPLVEDETKGDTMRLIDGFGNYRVRVYGAPGSVLANSTVFDLFFFDSGDREIVQGKRTYGWIKESQLRWLQDTSIQGHSQRIHVNPPALAFFHIPILEVRELWYTPFIGQFQEGVACSIVQSGVLQTFVSMGNVKAAFMGHDHVNDFCGTLKGVWFCYGGGFGYHAYGRPNWHRRARVIEAKLGKGRDTWEGIKLIKTWKRLDDEYLSKIDEQVLWETSDSFLK.

A signal peptide spans 1-30; the sequence is MNCSIGNWKHTVLYLTLIVSLLYFIESLIS. Asn91 and Asn209 each carry an N-linked (GlcNAc...) asparagine glycan. Zn(2+)-binding residues include His266 and His314. 314 to 316 is a binding site for substrate; sequence HDH. His316 is a binding site for Fe cation.

It belongs to the metallophosphoesterase superfamily. Purple acid phosphatase family. As to quaternary structure, homodimer. Requires Fe cation as cofactor. It depends on Zn(2+) as a cofactor. In terms of tissue distribution, expressed in roots, stems, leaves, flowers and siliques.

Its subcellular location is the secreted. In Arabidopsis thaliana (Mouse-ear cress), this protein is Probable inactive purple acid phosphatase 28 (PAP28).